Here is a 514-residue protein sequence, read N- to C-terminus: Bifunctional purine biosynthesis protein PurH (514 aa).

An MGS-like domain is found at 1–143; it reads MTRRALISVS…KNHAGVLVLV (143 aa).

It belongs to the PurH family.

It catalyses the reaction (6R)-10-formyltetrahydrofolate + 5-amino-1-(5-phospho-beta-D-ribosyl)imidazole-4-carboxamide = 5-formamido-1-(5-phospho-D-ribosyl)imidazole-4-carboxamide + (6S)-5,6,7,8-tetrahydrofolate. The catalysed reaction is IMP + H2O = 5-formamido-1-(5-phospho-D-ribosyl)imidazole-4-carboxamide. Its pathway is purine metabolism; IMP biosynthesis via de novo pathway; 5-formamido-1-(5-phospho-D-ribosyl)imidazole-4-carboxamide from 5-amino-1-(5-phospho-D-ribosyl)imidazole-4-carboxamide (10-formyl THF route): step 1/1. The protein operates within purine metabolism; IMP biosynthesis via de novo pathway; IMP from 5-formamido-1-(5-phospho-D-ribosyl)imidazole-4-carboxamide: step 1/1. In Deinococcus geothermalis (strain DSM 11300 / CIP 105573 / AG-3a), this protein is Bifunctional purine biosynthesis protein PurH.